The chain runs to 410 residues: Phosphopentomutase (410 aa).

Residues D10, D309, H314, D350, H351, and H362 each coordinate Mn(2+).

This sequence belongs to the phosphopentomutase family. Mn(2+) serves as cofactor.

Its subcellular location is the cytoplasm. The enzyme catalyses 2-deoxy-alpha-D-ribose 1-phosphate = 2-deoxy-D-ribose 5-phosphate. It carries out the reaction alpha-D-ribose 1-phosphate = D-ribose 5-phosphate. It participates in carbohydrate degradation; 2-deoxy-D-ribose 1-phosphate degradation; D-glyceraldehyde 3-phosphate and acetaldehyde from 2-deoxy-alpha-D-ribose 1-phosphate: step 1/2. Functionally, isomerase that catalyzes the conversion of deoxy-ribose 1-phosphate (dRib-1-P) and ribose 1-phosphate (Rib-1-P) to deoxy-ribose 5-phosphate (dRib-5-P) and ribose 5-phosphate (Rib-5-P), respectively. The polypeptide is Phosphopentomutase (Aliivibrio fischeri (strain ATCC 700601 / ES114) (Vibrio fischeri)).